The primary structure comprises 514 residues: Sugar transport protein 10 (514 aa).

Topologically, residues 1-18 (MAGGAFVSEGGGGGRSYE) are cytoplasmic. 10 consecutive transmembrane segments (helical) span residues 19-39 (GGVT…GLLF), 86-106 (LFTS…SVIT), 113-133 (VSMF…AFAV), 135-155 (VSML…ANQS), 170-190 (GALN…ANLI), 204-224 (VSLG…FILP), 285-305 (LIFC…VIMF), 320-340 (AALM…FVSI), 350-370 (LLFL…GSFI), and 389-409 (WILA…GPLG). The cysteines at positions 77 and 449 are disulfide-linked. Q177 contacts beta-D-glucose. Positions 295, 296, 301, and 332 each coordinate beta-D-glucose. W410 contacts beta-D-glucose. The next 2 membrane-spanning stretches (helical) occupy residues 428 to 448 (INVS…LTML) and 453 to 473 (FGLF…IYFL). Topologically, residues 474–514 (LPETKGVPIEEMGRVWKQHWFWKKYIPEDAIIGGHDDNNTN) are cytoplasmic.

It belongs to the major facilitator superfamily. Sugar transporter (TC 2.A.1.1) family. As to expression, expressed in primordia of lateral roots, pollinated stigmata, and pollen tubes.

The protein localises to the membrane. It catalyses the reaction D-glucose(out) + H(+)(out) = D-glucose(in) + H(+)(in). The enzyme catalyses D-mannose(out) + H(+)(out) = D-mannose(in) + H(+)(in). The catalysed reaction is D-galactose(in) + H(+)(in) = D-galactose(out) + H(+)(out). Functionally, hexose-H(+) symporter that catalyzes the high-affinity uptake of glucose, galactose and mannose. Proton-coupled symporter responsible for the uptake of glucose from the apoplast into the cells. The protein is Sugar transport protein 10 of Arabidopsis thaliana (Mouse-ear cress).